The chain runs to 564 residues: Dihydroxy-acid dehydratase (564 aa).

Asp78 contacts Mg(2+). Cys119 provides a ligand contact to [2Fe-2S] cluster. Mg(2+) is bound by residues Asp120 and Lys121. Lys121 bears the N6-carboxylysine mark. Cys192 is a binding site for [2Fe-2S] cluster. Glu451 serves as a coordination point for Mg(2+). Ser477 acts as the Proton acceptor in catalysis.

This sequence belongs to the IlvD/Edd family. Homodimer. [2Fe-2S] cluster is required as a cofactor. Mg(2+) serves as cofactor.

It carries out the reaction (2R)-2,3-dihydroxy-3-methylbutanoate = 3-methyl-2-oxobutanoate + H2O. It catalyses the reaction (2R,3R)-2,3-dihydroxy-3-methylpentanoate = (S)-3-methyl-2-oxopentanoate + H2O. It participates in amino-acid biosynthesis; L-isoleucine biosynthesis; L-isoleucine from 2-oxobutanoate: step 3/4. The protein operates within amino-acid biosynthesis; L-valine biosynthesis; L-valine from pyruvate: step 3/4. In terms of biological role, functions in the biosynthesis of branched-chain amino acids. Catalyzes the dehydration of (2R,3R)-2,3-dihydroxy-3-methylpentanoate (2,3-dihydroxy-3-methylvalerate) into 2-oxo-3-methylpentanoate (2-oxo-3-methylvalerate) and of (2R)-2,3-dihydroxy-3-methylbutanoate (2,3-dihydroxyisovalerate) into 2-oxo-3-methylbutanoate (2-oxoisovalerate), the penultimate precursor to L-isoleucine and L-valine, respectively. This chain is Dihydroxy-acid dehydratase, found in Nitratiruptor sp. (strain SB155-2).